Here is a 265-residue protein sequence, read N- to C-terminus: Glutamate racemase (265 aa).

Substrate is bound by residues 12 to 13 and 44 to 45; these read DS and YG. Cys75 acts as the Proton donor/acceptor in catalysis. 76–77 serves as a coordination point for substrate; that stretch reads NT. Cys186 acts as the Proton donor/acceptor in catalysis. A substrate-binding site is contributed by 187-188; sequence TH.

Belongs to the aspartate/glutamate racemases family.

The catalysed reaction is L-glutamate = D-glutamate. It functions in the pathway cell wall biogenesis; peptidoglycan biosynthesis. In terms of biological role, provides the (R)-glutamate required for cell wall biosynthesis. This is Glutamate racemase from Pseudomonas entomophila (strain L48).